The following is a 565-amino-acid chain: Arginine--tRNA ligase (565 aa).

Residues 121–131 (PNIAKPMGMGH) carry the 'HIGH' region motif.

This sequence belongs to the class-I aminoacyl-tRNA synthetase family. As to quaternary structure, monomer.

The protein resides in the cytoplasm. It carries out the reaction tRNA(Arg) + L-arginine + ATP = L-arginyl-tRNA(Arg) + AMP + diphosphate. This is Arginine--tRNA ligase from Lactobacillus delbrueckii subsp. bulgaricus (strain ATCC BAA-365 / Lb-18).